Here is a 254-residue protein sequence, read N- to C-terminus: CRISPR-associated endoribonuclease Cas6 1 (254 aa).

The Proton acceptor role is filled by Tyr-32. His-47 (proton donor) is an active-site residue.

Belongs to the CRISPR-associated protein Cas6/Cse3/CasE family.

Its function is as follows. CRISPR (clustered regularly interspaced short palindromic repeat) is an adaptive immune system that provides protection against mobile genetic elements (viruses, transposable elements and conjugative plasmids). CRISPR clusters contain sequences complementary to antecedent mobile elements and target invading nucleic acids. CRISPR clusters are transcribed and processed into CRISPR RNA (crRNA). This protein processes pre-crRNA into individual crRNA units. The protein is CRISPR-associated endoribonuclease Cas6 1 (cas6a) of Methanocaldococcus jannaschii (strain ATCC 43067 / DSM 2661 / JAL-1 / JCM 10045 / NBRC 100440) (Methanococcus jannaschii).